The primary structure comprises 257 residues: 3-methyl-2-oxobutanoate hydroxymethyltransferase (257 aa).

Asp-42 and Asp-86 together coordinate Mg(2+). 3-methyl-2-oxobutanoate contacts are provided by residues Asp-42–Ser-43, Asp-86, and Lys-116. Glu-118 contributes to the Mg(2+) binding site. The active-site Proton acceptor is Glu-185.

This sequence belongs to the PanB family. In terms of assembly, homodecamer; pentamer of dimers. Requires Mg(2+) as cofactor.

It is found in the cytoplasm. It carries out the reaction 3-methyl-2-oxobutanoate + (6R)-5,10-methylene-5,6,7,8-tetrahydrofolate + H2O = 2-dehydropantoate + (6S)-5,6,7,8-tetrahydrofolate. It functions in the pathway cofactor biosynthesis; (R)-pantothenate biosynthesis; (R)-pantoate from 3-methyl-2-oxobutanoate: step 1/2. Catalyzes the reversible reaction in which hydroxymethyl group from 5,10-methylenetetrahydrofolate is transferred onto alpha-ketoisovalerate to form ketopantoate. The protein is 3-methyl-2-oxobutanoate hydroxymethyltransferase of Prochlorococcus marinus (strain MIT 9312).